The primary structure comprises 274 residues: Diaminopimelate epimerase (274 aa).

3 residues coordinate substrate: Asn-11, Gln-44, and Asn-64. The active-site Proton donor is Cys-73. Substrate contacts are provided by residues Gly-74–Asn-75, Asn-157, Asn-190, and Glu-208–Arg-209. Residue Cys-217 is the Proton acceptor of the active site. Gly-218–Ser-219 contacts substrate.

This sequence belongs to the diaminopimelate epimerase family. As to quaternary structure, homodimer (Potential). Previously DapF has been proposed to be a monomer, however it seems that it adopts a dimeric structure.

The protein localises to the cytoplasm. The catalysed reaction is (2S,6S)-2,6-diaminopimelate = meso-2,6-diaminopimelate. Its pathway is amino-acid biosynthesis; L-lysine biosynthesis via DAP pathway; DL-2,6-diaminopimelate from LL-2,6-diaminopimelate: step 1/1. Its activity is regulated as follows. Inhibited by LL-aziridino (LL-AziDAP), DL-aziridino (DL-AziDAP). Also inhibited by (2S,3R,6S)-2,6-diamino-3-fluoropimelate (L,L-3-fluoro-DAP) and (2R,3S,6S)-2,6-diamino-3-fluoropimelate (D,L-3-fluoro-DAP). Catalyzes the stereoinversion of LL-2,6-diaminopimelate (L,L-DAP) to meso-diaminopimelate (meso-DAP), a precursor of L-lysine and an essential component of the bacterial peptidoglycan. Only accepts DAP isomers with the L configuration. The sequence is that of Diaminopimelate epimerase from Haemophilus influenzae (strain ATCC 51907 / DSM 11121 / KW20 / Rd).